The chain runs to 115 residues: Large ribosomal subunit protein bL20 (115 aa).

Belongs to the bacterial ribosomal protein bL20 family.

Its function is as follows. Binds directly to 23S ribosomal RNA and is necessary for the in vitro assembly process of the 50S ribosomal subunit. It is not involved in the protein synthesizing functions of that subunit. In Borrelia duttonii (strain Ly), this protein is Large ribosomal subunit protein bL20.